The chain runs to 141 residues: Protein wingless (141 aa).

Residue serine 3 is the site of O-palmitoleoyl serine; by PORCN attachment. Positions 40–49 are enriched in polar residues; it reads TDLEAPTQRN. The tract at residues 40 to 61 is disordered; the sequence is TDLEAPTQRNDAAPHRAPRRER. Residues cysteine 107 and cysteine 122 are joined by a disulfide bond. Residues asparagine 108 and asparagine 138 are each glycosylated (N-linked (GlcNAc...) asparagine).

This sequence belongs to the Wnt family. Palmitoleoylated by porcupine. The lipid group functions as a sorting signal, targeting the ligand to polarized vesicles that transport wg to unique sites at the cell surface. Depalmitoleoylated by notum, leading to inhibit Wnt signaling pathway.

The protein localises to the secreted. The protein resides in the extracellular space. Its subcellular location is the extracellular matrix. Its function is as follows. Segment polarity protein. Binds to the frizzled seven-transmembrane receptors. This protein is probably a growth factor. This chain is Protein wingless (WG), found in Manduca sexta (Tobacco hawkmoth).